Here is a 126-residue protein sequence, read N- to C-terminus: Holo-[acyl-carrier-protein] synthase (126 aa).

Mg(2+)-binding residues include Asp-9 and Glu-58.

This sequence belongs to the P-Pant transferase superfamily. AcpS family. Requires Mg(2+) as cofactor.

The protein resides in the cytoplasm. It catalyses the reaction apo-[ACP] + CoA = holo-[ACP] + adenosine 3',5'-bisphosphate + H(+). Functionally, transfers the 4'-phosphopantetheine moiety from coenzyme A to a Ser of acyl-carrier-protein. The sequence is that of Holo-[acyl-carrier-protein] synthase from Hamiltonella defensa subsp. Acyrthosiphon pisum (strain 5AT).